An 832-amino-acid polypeptide reads, in one-letter code: Leucine--tRNA ligase (832 aa).

The 'HIGH' region signature appears at 58–68 (PYPSGDLHMGH). The short motif at 598-602 (AMSKS) is the 'KMSKS' region element. Lys601 contributes to the ATP binding site.

It belongs to the class-I aminoacyl-tRNA synthetase family.

The protein localises to the cytoplasm. The catalysed reaction is tRNA(Leu) + L-leucine + ATP = L-leucyl-tRNA(Leu) + AMP + diphosphate. The sequence is that of Leucine--tRNA ligase from Acidothermus cellulolyticus (strain ATCC 43068 / DSM 8971 / 11B).